The chain runs to 184 residues: ATP-dependent protease subunit HslV (184 aa).

The active site involves Thr-12. Residues Ala-166, Cys-169, and Thr-172 each contribute to the Na(+) site.

This sequence belongs to the peptidase T1B family. HslV subfamily. In terms of assembly, a double ring-shaped homohexamer of HslV is capped on each side by a ring-shaped HslU homohexamer. The assembly of the HslU/HslV complex is dependent on binding of ATP.

It localises to the cytoplasm. It catalyses the reaction ATP-dependent cleavage of peptide bonds with broad specificity.. Allosterically activated by HslU binding. Functionally, protease subunit of a proteasome-like degradation complex believed to be a general protein degrading machinery. This is ATP-dependent protease subunit HslV from Brucella canis (strain ATCC 23365 / NCTC 10854 / RM-666).